Here is a 345-residue protein sequence, read N- to C-terminus: UbiA prenyltransferase domain-containing protein 1 (345 aa).

Transmembrane regions (helical) follow at residues 60–80, 90–110, 141–161, 169–189, 213–233, 251–273, 285–305, and 324–344; these read LALR…GTAI, LLLF…GNLV, VRFG…LYFI, LALI…GIGF, AVQV…LALS, QAGI…YNLL, ATRY…AFSL, and LNLL…AGSL.

The protein belongs to the UbiA prenyltransferase family.

The protein localises to the endoplasmic reticulum membrane. Its subcellular location is the golgi apparatus membrane. It is found in the mitochondrion membrane. The enzyme catalyses menadiol + (2E,6E,10E)-geranylgeranyl diphosphate = menaquinol-4 + diphosphate. The catalysed reaction is all-trans-decaprenyl diphosphate + 4-hydroxybenzoate = 4-hydroxy-3-(all-trans-decaprenyl)benzoate + diphosphate. Its pathway is quinol/quinone metabolism; menaquinone biosynthesis. The protein operates within cofactor biosynthesis; ubiquinone biosynthesis. Its function is as follows. Prenyltransferase that mediates the formation of menaquinone-4 (MK-4) and coenzyme Q10. MK-4 is a vitamin K2 isoform required for endothelial cell development. Mediates the conversion of phylloquinone (PK) into MK-4, probably by cleaving the side chain of phylloquinone (PK) to release 2-methyl-1,4-naphthoquinone (menadione; K3) and then prenylating it with geranylgeranyl pyrophosphate (GGPP) to form MK-4. Also plays a role in cardiovascular development independently of MK-4 biosynthesis, by acting as a coenzyme Q10 biosynthetic enzyme: coenzyme Q10, also named ubiquinone, plays an important antioxidant role in the cardiovascular system. Mediates biosynthesis of coenzyme Q10 in the Golgi membrane, leading to protect cardiovascular tissues from NOS3/eNOS-dependent oxidative stress. This Xenopus tropicalis (Western clawed frog) protein is UbiA prenyltransferase domain-containing protein 1 (ubiad1).